An 887-amino-acid polypeptide reads, in one-letter code: Pyruvate dehydrogenase E1 component (887 aa).

In terms of assembly, homodimer. Part of the PDH complex, consisting of multiple copies of pyruvate dehydrogenase (E1), dihydrolipoamide acetyltransferase (E2) and lipoamide dehydrogenase (E3). Requires thiamine diphosphate as cofactor.

It catalyses the reaction N(6)-[(R)-lipoyl]-L-lysyl-[protein] + pyruvate + H(+) = N(6)-[(R)-S(8)-acetyldihydrolipoyl]-L-lysyl-[protein] + CO2. Component of the pyruvate dehydrogenase (PDH) complex, that catalyzes the overall conversion of pyruvate to acetyl-CoA and CO(2). This Buchnera aphidicola subsp. Acyrthosiphon pisum (strain APS) (Acyrthosiphon pisum symbiotic bacterium) protein is Pyruvate dehydrogenase E1 component (aceE).